We begin with the raw amino-acid sequence, 95 residues long: Integration host factor subunit beta (95 aa).

Belongs to the bacterial histone-like protein family. Heterodimer of an alpha and a beta chain.

Functionally, this protein is one of the two subunits of integration host factor, a specific DNA-binding protein that functions in genetic recombination as well as in transcriptional and translational control. This chain is Integration host factor subunit beta, found in Paracoccus denitrificans (strain Pd 1222).